The sequence spans 310 residues: Putative S-adenosyl-L-methionine-dependent methyltransferase MMAR_3534 (310 aa).

Residues Asp131 and 160 to 161 each bind S-adenosyl-L-methionine; that span reads DL.

Belongs to the UPF0677 family.

Exhibits S-adenosyl-L-methionine-dependent methyltransferase activity. This is Putative S-adenosyl-L-methionine-dependent methyltransferase MMAR_3534 from Mycobacterium marinum (strain ATCC BAA-535 / M).